A 114-amino-acid polypeptide reads, in one-letter code: Fumarate reductase subunit D (114 aa).

3 consecutive transmembrane segments (helical) span residues 24-44 (ISAL…PLGI), 49-69 (GIIA…LTIF), and 94-114 (LIFY…VASI).

The protein belongs to the FrdD family. Part of an enzyme complex containing four subunits: a flavoprotein (FrdA), an iron-sulfur protein (FrdB), and two hydrophobic anchor proteins (FrdC and FrdD).

The protein resides in the cell inner membrane. Functionally, anchors the catalytic components of the fumarate reductase complex to the cell membrane, binds quinones. This chain is Fumarate reductase subunit D, found in Actinobacillus succinogenes (strain ATCC 55618 / DSM 22257 / CCUG 43843 / 130Z).